A 475-amino-acid polypeptide reads, in one-letter code: Ribulose bisphosphate carboxylase large chain (475 aa).

The propeptide occupies methionine 1–serine 2. Position 3 is an N-acetylproline (proline 3). An N6,N6,N6-trimethyllysine modification is found at lysine 14. Residues asparagine 123 and threonine 173 each contribute to the substrate site. Residue lysine 175 is the Proton acceptor of the active site. Lysine 177 contacts substrate. 3 residues coordinate Mg(2+): lysine 201, aspartate 203, and glutamate 204. An N6-carboxylysine modification is found at lysine 201. Histidine 294 serves as the catalytic Proton acceptor. Positions 327 and 379 each coordinate substrate.

The protein belongs to the RuBisCO large chain family. Type I subfamily. As to quaternary structure, heterohexadecamer of 8 large chains and 8 small chains; disulfide-linked. The disulfide link is formed within the large subunit homodimers. Mg(2+) serves as cofactor. In terms of processing, the disulfide bond which can form in the large chain dimeric partners within the hexadecamer appears to be associated with oxidative stress and protein turnover.

It localises to the plastid. Its subcellular location is the chloroplast. The catalysed reaction is 2 (2R)-3-phosphoglycerate + 2 H(+) = D-ribulose 1,5-bisphosphate + CO2 + H2O. The enzyme catalyses D-ribulose 1,5-bisphosphate + O2 = 2-phosphoglycolate + (2R)-3-phosphoglycerate + 2 H(+). Its function is as follows. RuBisCO catalyzes two reactions: the carboxylation of D-ribulose 1,5-bisphosphate, the primary event in carbon dioxide fixation, as well as the oxidative fragmentation of the pentose substrate in the photorespiration process. Both reactions occur simultaneously and in competition at the same active site. The sequence is that of Ribulose bisphosphate carboxylase large chain from Amaranthus hypochondriacus (Prince-of-Wales feather).